The primary structure comprises 95 residues: uncharacterized protein (95 aa).

The chain crosses the membrane as a helical span at residues 45–65; it reads WLSGLAFVLQAALVMPVVLAF.

It localises to the membrane. This is an uncharacterized protein from Mycobacterium leprae (strain TN).